A 20-amino-acid polypeptide reads, in one-letter code: Dihydrolipoamide-residue succinyltransferase component of 2-oxoglutarate dehydrogenase complex (20 aa).

This sequence belongs to the 2-oxoacid dehydrogenase family. As to quaternary structure, forms a 24-polypeptide structural core with octahedral symmetry. (R)-lipoate is required as a cofactor.

It localises to the mitochondrion membrane. It catalyses the reaction N(6)-[(R)-dihydrolipoyl]-L-lysyl-[protein] + succinyl-CoA = N(6)-[(R)-S(8)-succinyldihydrolipoyl]-L-lysyl-[protein] + CoA. It participates in amino-acid degradation; L-lysine degradation via saccharopine pathway; glutaryl-CoA from L-lysine: step 6/6. Functionally, the 2-oxoglutarate dehydrogenase complex catalyzes the overall conversion of 2-oxoglutarate to succinyl-CoA and CO(2). It contains multiple copies of three enzymatic components: 2-oxoglutarate dehydrogenase (E1), dihydrolipoamide succinyltransferase (E2) and lipoamide dehydrogenase (E3). This chain is Dihydrolipoamide-residue succinyltransferase component of 2-oxoglutarate dehydrogenase complex, found in Solanum tuberosum (Potato).